The sequence spans 561 residues: Putative transport protein YbjL (561 aa).

Helical transmembrane passes span 8 to 28 (LLNG…LCLG), 32 to 52 (LGSI…LLGQ), 66 to 86 (FMLF…SIFF), 94 to 114 (MLAL…GKLF), and 158 to 178 (NLSL…IVGA). RCK C-terminal domains are found at residues 200 to 288 (RGLD…SFRN) and 292 to 373 (VFDR…RIGF). A run of 5 helical transmembrane segments spans residues 383 to 403 (LLAF…TFQF), 406 to 426 (FSFG…LGFM), 451 to 471 (VFMA…LGAI), 475 to 495 (MLIA…LFGA), and 540 to 560 (AIAN…WPGL).

Belongs to the AAE transporter (TC 2.A.81) family. YbjL subfamily.

The protein resides in the cell membrane. The protein is Putative transport protein YbjL of Escherichia coli O139:H28 (strain E24377A / ETEC).